Consider the following 324-residue polypeptide: Probable cell division protein WhiA (324 aa).

Positions 276–310 form a DNA-binding region, H-T-H motif; it reads TLKELGEMMQGGKVSKSGINHRLRKIDEFADKLRN.

It belongs to the WhiA family.

Involved in cell division and chromosome segregation. This chain is Probable cell division protein WhiA, found in Shouchella clausii (strain KSM-K16) (Alkalihalobacillus clausii).